The following is an 890-amino-acid chain: Serine/threonine-protein kinase D3 (890 aa).

Residues Ser-6, Ser-27, Ser-37, Ser-41, and Ser-44 each carry the phosphoserine modification. The segment at 154-204 (PHTLYVHSYKAPTFCDYCGEMLWGLVRQGLKCEGCGLNYHKRCAFKIPNNC) adopts a Phorbol-ester/DAG-type 1 zinc-finger fold. 2 positions are modified to phosphoserine: Ser-213 and Ser-216. Residues 271 to 321 (PHTFAVHSYTRPTICQYCKRLLKGLFRQGMQCKDCKFNCHKRCASKVPRDC) form a Phorbol-ester/DAG-type 2 zinc finger. Residues 332–371 (SSLGTDTDIPMDIDNNDINSDSSRGLDDTEEPSPPEDKMF) are disordered. Phosphoserine occurs at positions 364, 391, and 395. Positions 416–532 (TMVKEGWMVH…WEKAIRQALM (117 aa)) constitute a PH domain. Phosphotyrosine is present on Tyr-426. A Phosphoserine modification is found at Ser-442. Tyr-457 is modified (phosphotyrosine). Phosphothreonine is present on Thr-535. The residue at position 539 (Ser-539) is a Phosphoserine. In terms of domain architecture, Protein kinase spans 576–832 (IFADEVLGSG…VDKSLSHPWL (257 aa)). Residues 582–590 (LGSGQFGIV) and Lys-605 contribute to the ATP site. Residue Asp-699 is the Proton acceptor of the active site. At Ser-731 the chain carries Phosphoserine; by PKC. Ser-735 is subject to Phosphoserine; by autocatalysis. Tyr-742 carries the post-translational modification Phosphotyrosine.

Belongs to the protein kinase superfamily. CAMK Ser/Thr protein kinase family. PKD subfamily. It depends on Mg(2+) as a cofactor. As to expression, ubiquitous.

Its subcellular location is the cytoplasm. It is found in the membrane. The catalysed reaction is L-seryl-[protein] + ATP = O-phospho-L-seryl-[protein] + ADP + H(+). It carries out the reaction L-threonyl-[protein] + ATP = O-phospho-L-threonyl-[protein] + ADP + H(+). Activated by DAG and phorbol esters. Phorbol-ester/DAG-type domains 1 and 2 bind both DAG and phorbol ester with high affinity and mediate translocation to the cell membrane. Autophosphorylation of Ser-735 and phosphorylation of Ser-731 by PKC relieves auto-inhibition by the PH domain. Its function is as follows. Converts transient diacylglycerol (DAG) signals into prolonged physiological effects, downstream of PKC. Involved in resistance to oxidative stress. In Homo sapiens (Human), this protein is Serine/threonine-protein kinase D3 (PRKD3).